A 242-amino-acid polypeptide reads, in one-letter code: Pyridoxine 5'-phosphate synthase (242 aa).

N7 is a 3-amino-2-oxopropyl phosphate binding site. 9–10 (DH) provides a ligand contact to 1-deoxy-D-xylulose 5-phosphate. R18 contributes to the 3-amino-2-oxopropyl phosphate binding site. The active-site Proton acceptor is H43. Positions 45 and 50 each coordinate 1-deoxy-D-xylulose 5-phosphate. Catalysis depends on E70, which acts as the Proton acceptor. Position 100 (T100) interacts with 1-deoxy-D-xylulose 5-phosphate. H190 acts as the Proton donor in catalysis. Residues G191 and 212-213 (GH) contribute to the 3-amino-2-oxopropyl phosphate site.

It belongs to the PNP synthase family. As to quaternary structure, homooctamer; tetramer of dimers.

It localises to the cytoplasm. It catalyses the reaction 3-amino-2-oxopropyl phosphate + 1-deoxy-D-xylulose 5-phosphate = pyridoxine 5'-phosphate + phosphate + 2 H2O + H(+). It functions in the pathway cofactor biosynthesis; pyridoxine 5'-phosphate biosynthesis; pyridoxine 5'-phosphate from D-erythrose 4-phosphate: step 5/5. Catalyzes the complicated ring closure reaction between the two acyclic compounds 1-deoxy-D-xylulose-5-phosphate (DXP) and 3-amino-2-oxopropyl phosphate (1-amino-acetone-3-phosphate or AAP) to form pyridoxine 5'-phosphate (PNP) and inorganic phosphate. The chain is Pyridoxine 5'-phosphate synthase from Thermodesulfovibrio yellowstonii (strain ATCC 51303 / DSM 11347 / YP87).